The following is a 946-amino-acid chain: Protein translocase subunit SecA (946 aa).

Residues Q87, 105-109, and D524 contribute to the ATP site; that span reads GEGKT. Residues 904 to 933 form a disordered region; the sequence is PAQTTDKADRDPNKPETWGKVGRNEDCPCG. C930, C932, C941, and H942 together coordinate Zn(2+).

The protein belongs to the SecA family. As to quaternary structure, monomer and homodimer. Part of the essential Sec protein translocation apparatus which comprises SecA, SecYEG and auxiliary proteins SecDF-YajC and YidC. Zn(2+) is required as a cofactor.

Its subcellular location is the cell inner membrane. It is found in the cytoplasm. It carries out the reaction ATP + H2O + cellular proteinSide 1 = ADP + phosphate + cellular proteinSide 2.. In terms of biological role, part of the Sec protein translocase complex. Interacts with the SecYEG preprotein conducting channel. Has a central role in coupling the hydrolysis of ATP to the transfer of proteins into and across the cell membrane, serving both as a receptor for the preprotein-SecB complex and as an ATP-driven molecular motor driving the stepwise translocation of polypeptide chains across the membrane. This Rhodopseudomonas palustris (strain TIE-1) protein is Protein translocase subunit SecA.